The sequence spans 92 residues: Small ribosomal subunit protein uS19 (92 aa).

It belongs to the universal ribosomal protein uS19 family.

In terms of biological role, protein S19 forms a complex with S13 that binds strongly to the 16S ribosomal RNA. The chain is Small ribosomal subunit protein uS19 from Methylobacterium sp. (strain 4-46).